The following is a 1285-amino-acid chain: ABC-type transporter fsqE (1285 aa).

The 290-residue stretch at 54–343 folds into the ABC transmembrane type-1 1 domain; it reads VSSICAVLAG…IAPSAQALLS (290 aa). The next 6 membrane-spanning stretches (helical) occupy residues 57–77, 102–122, 176–196, 203–223, 281–301, and 312–332; these read ICAV…GLLV, LYYV…TVGF, LAVM…AFIM, IISP…AYMV, VAGM…LAFW, and MSVA…FAII. The 243-residue stretch at 380-622 folds into the ABC transporter 1 domain; the sequence is LDRVGLIYPS…NGAYAALVQK (243 aa). 413–420 serves as a coordination point for ATP; the sequence is GSSGSGKS. The N-linked (GlcNAc...) asparagine glycan is linked to asparagine 467. Residues 627–654 are disordered; it reads DTHDHKAPDGARLSIEDDDDEDSRYGGN. The next 6 helical transmembrane spans lie at 707 to 727, 753 to 773, 831 to 851, 855 to 875, 931 to 951, and 968 to 988; these read LFGL…SVFF, GLYV…EIAL, GILT…AIGW, LVCT…LQVL, ILLA…CAAL, and FQVY…GSIF. The ABC transmembrane type-1 2 domain occupies 713–996; it reads AILAGLTIPV…IFTYAPDASK (284 aa). Asparagine 1037 carries N-linked (GlcNAc...) asparagine glycosylation. Residues 1043–1281 form the ABC transporter 2 domain; it reads VEFEHVSFTY…RGKYWEMVSM (239 aa). Residue 1078 to 1085 participates in ATP binding; it reads GQSGSGKS. N-linked (GlcNAc...) asparagine glycosylation occurs at asparagine 1138.

Belongs to the ABC transporter superfamily. ABCB family. Multidrug resistance exporter (TC 3.A.1.201) subfamily.

It is found in the membrane. Its pathway is secondary metabolite biosynthesis. Functionally, ABC-type transporter; part of the gene cluster that mediates the biosynthesis of the isoquinoline alkaloids fumisoquin A, fumisoquin B and fumisoquin C; as well as small amounts of fumipyrrole as a shunt metabolite. The products of the cluster lead to a brown coloration and are important for growth and conidiation. FsqE possibly plays a role of self-protection. This Aspergillus fumigatus (strain ATCC MYA-4609 / CBS 101355 / FGSC A1100 / Af293) (Neosartorya fumigata) protein is ABC-type transporter fsqE.